A 92-amino-acid polypeptide reads, in one-letter code: MTRSLKKNPFVANHLLKKINKLNNKAEKEIIVTWSRASTIIPTMIGHTIAIHNGKEHLPIYITDRMVGHKLGEFAPTLNFRGHAKNDNKSRR.

It belongs to the universal ribosomal protein uS19 family.

It localises to the plastid. It is found in the chloroplast. Its function is as follows. Protein S19 forms a complex with S13 that binds strongly to the 16S ribosomal RNA. In Manihot esculenta (Cassava), this protein is Small ribosomal subunit protein uS19c.